The sequence spans 388 residues: Succinate--CoA ligase [ADP-forming] subunit beta (388 aa).

The region spanning 9-244 (KSLFAEYGLP…PSQDDAREAH (236 aa)) is the ATP-grasp domain. Residues K46, 53–55 (GRG), E99, T102, and E107 contribute to the ATP site. Residues N199 and D213 each coordinate Mg(2+). Substrate is bound by residues N264 and 321–323 (GIV).

The protein belongs to the succinate/malate CoA ligase beta subunit family. In terms of assembly, heterotetramer of two alpha and two beta subunits. It depends on Mg(2+) as a cofactor.

It catalyses the reaction succinate + ATP + CoA = succinyl-CoA + ADP + phosphate. It carries out the reaction GTP + succinate + CoA = succinyl-CoA + GDP + phosphate. Its pathway is carbohydrate metabolism; tricarboxylic acid cycle; succinate from succinyl-CoA (ligase route): step 1/1. In terms of biological role, succinyl-CoA synthetase functions in the citric acid cycle (TCA), coupling the hydrolysis of succinyl-CoA to the synthesis of either ATP or GTP and thus represents the only step of substrate-level phosphorylation in the TCA. The beta subunit provides nucleotide specificity of the enzyme and binds the substrate succinate, while the binding sites for coenzyme A and phosphate are found in the alpha subunit. The sequence is that of Succinate--CoA ligase [ADP-forming] subunit beta from Shewanella frigidimarina (strain NCIMB 400).